A 580-amino-acid chain; its full sequence is Laccase-20 (580 aa).

Positions 1–23 are cleaved as a signal peptide; it reads MVASLLCTVAVAVLAVAAVGGEA. 2 consecutive Plastocyanin-like domains span residues 31–147 and 156–310; these read VVHE…PRDG and KDVP…YTGV. 2 N-linked (GlcNAc...) asparagine glycosylation sites follow: Asn36 and Asn42. Cu cation contacts are provided by His81 and His83. An N-linked (GlcNAc...) asparagine glycan is attached at Asn115. Cu cation-binding residues include His126 and His128. 7 N-linked (GlcNAc...) asparagine glycosylation sites follow: Asn200, Asn339, Asn373, Asn392, Asn399, Asn429, and Asn460. One can recognise a Plastocyanin-like 3 domain in the interval 419–561; that stretch reads DFPVRPPRPY…ATAFIVEDGP (143 aa). Asn478, His481, His483, His540, Cys541, His542, His546, and Met551 together coordinate Cu cation. The disordered stretch occupies residues 560–580; it reads GPTPETSLPPPPPEFKRCDAS.

This sequence belongs to the multicopper oxidase family. The cofactor is Cu cation.

It localises to the secreted. It is found in the extracellular space. The protein resides in the apoplast. The enzyme catalyses 4 hydroquinone + O2 = 4 benzosemiquinone + 2 H2O. Functionally, lignin degradation and detoxification of lignin-derived products. This chain is Laccase-20 (LAC20), found in Oryza sativa subsp. japonica (Rice).